Consider the following 667-residue polypeptide: Soluble guanylate cyclase 89Da (667 aa).

Residue H104 participates in heme binding. Residues 337 to 364 (AQEFSESHPVDDDESAREDEIDPATGER) form a disordered region. Acidic residues predominate over residues 347–358 (DDDESAREDEID). A coiled-coil region spans residues 427–455 (QHCSKLEIMFEKEEQRSDELEKSLELADS). Positions 491–617 (SVIFLEVMNV…DTVNTASRME (127 aa)) constitute a Guanylate cyclase domain.

This sequence belongs to the adenylyl cyclase class-4/guanylyl cyclase family. Heterodimer; with Gyc88E, in the presence of magnesium or manganese. Heme is required as a cofactor.

Its subcellular location is the cytoplasm. It carries out the reaction GTP = 3',5'-cyclic GMP + diphosphate. Probably not activated by nitric oxide (NO). Heterodimer also exhibits some stimulation, some compounds (SIN-1 and two of the NONOates) that were ineffective at stimulating Gyc-88E alone did stimulate the heterodimer. Heterodimers with Gyc-89Da and Gyc-89Db are activated in response to changing oxygen concentrations, alerting flies to hypoxic environments. Under normal oxygen concentrations, oxygen binds to the heme group and results in low levels of guanylyl cyclase activity. When exposed to reduced oxygen concentrations, the oxygen dissociates from the heme group resulting in activation of the enzyme. The polypeptide is Soluble guanylate cyclase 89Da (Drosophila melanogaster (Fruit fly)).